Reading from the N-terminus, the 454-residue chain is Laccase-3 (454 aa).

2 consecutive Plastocyanin-like domains span residues 1–95 and 101–252; these read PGPT…GPAT and DLGV…YSGA. N-linked (GlcNAc...) asparagine glycosylation is present at Asn-24. Residues His-29, His-31, His-73, and His-75 each coordinate Cu cation. Residues Asn-138, Asn-169, Asn-218, Asn-314, and Asn-334 are each glycosylated (N-linked (GlcNAc...) asparagine). Residues 319 to 454 enclose the Plastocyanin-like 3 domain; it reads DVDWKKPILQ…SEGLAVQFQG (136 aa). Residues His-375, His-378, and His-380 each coordinate Cu cation. Asn-395 is a glycosylation site (N-linked (GlcNAc...) asparagine). 4 residues coordinate Cu cation: His-437, Cys-438, His-439, and His-443.

This sequence belongs to the multicopper oxidase family. It depends on Cu cation as a cofactor.

The protein localises to the secreted. It carries out the reaction 4 hydroquinone + O2 = 4 benzosemiquinone + 2 H2O. Its function is as follows. Lignin degradation and detoxification of lignin-derived products. In Botryotinia fuckeliana (Noble rot fungus), this protein is Laccase-3 (lcc3).